Here is a 269-residue protein sequence, read N- to C-terminus: Phosphatidate cytidylyltransferase (269 aa).

8 helical membrane-spanning segments follow: residues 13-33 (LAAI…TILI), 50-70 (LKLV…FLLP), 81-101 (ISKM…TVLV), 110-130 (VGFI…FIEI), 138-158 (LTYI…AYFV), 180-200 (FAGG…VAQL), 201-221 (PIPY…GQLG), and 247-267 (ILDR…LLAL).

This sequence belongs to the CDS family.

The protein localises to the cell membrane. The catalysed reaction is a 1,2-diacyl-sn-glycero-3-phosphate + CTP + H(+) = a CDP-1,2-diacyl-sn-glycerol + diphosphate. It participates in phospholipid metabolism; CDP-diacylglycerol biosynthesis; CDP-diacylglycerol from sn-glycerol 3-phosphate: step 3/3. This Bacillus subtilis (strain 168) protein is Phosphatidate cytidylyltransferase (cdsA).